The sequence spans 452 residues: Transcription factor PERIANTHIA (452 aa).

The bZIP domain occupies 164-227; sequence DQRTLRRLAQ…RGVSADHTHL (64 aa). The tract at residues 166 to 186 is basic motif; that stretch reads RTLRRLAQNREAARKSRLRKK. Residues 192–206 form a leucine-zipper region; the sequence is LENSRIRLAQLEEEL. The region spanning 233–449 is the DOG1 domain; sequence VFSFELEYTR…RALSSLWLAR (217 aa).

Belongs to the bZIP family. As to quaternary structure, interacts with GRXC7/ROXY1. Interacts with BOP1 and BOP2.

The protein localises to the nucleus. Transcriptional activator involved in the determination of floral organ number. Acts to determine floral organ patterning by establishing floral organ primordia in specific numbers and positions. Plays a role in regulating stem cell fate by directly controlling AG expression. Binds to the 5'-AAGAAT-3' cis-acting element found in AG promoter. Might represent a target for a post-translational modification by GRXC7/ROXY1. This is Transcription factor PERIANTHIA (PAN) from Arabidopsis thaliana (Mouse-ear cress).